The primary structure comprises 174 residues: Adipose-secreted signaling protein (174 aa).

Ala-2 is modified (N-acetylalanine). At Thr-147 the chain carries Phosphothreonine.

It belongs to the ADISSP family.

The protein localises to the secreted. In terms of biological role, adipocyte-secreted protein (adipokine) that acts as a key regulator for white adipose tissue (WAT) thermogenesis and glucose homeostasis at least in part through activation of protein kinase A (PKA). The sequence is that of Adipose-secreted signaling protein from Homo sapiens (Human).